A 215-amino-acid chain; its full sequence is Riboflavin synthase (215 aa).

Lumazine-binding repeat units lie at residues 1–96 (MFTG…FGGH) and 97–193 (IVSG…EQFL). 2,4-dihydroxypteridine contacts are provided by residues 4–6 (GII), 47–49 (CLT), 61–66 (DVMSET), 100–102 (GHI), Lys-135, 144–146 (SLT), and 158–163 (SIIPHT).

Homotrimer.

The catalysed reaction is 2 6,7-dimethyl-8-(1-D-ribityl)lumazine + H(+) = 5-amino-6-(D-ribitylamino)uracil + riboflavin. It functions in the pathway cofactor biosynthesis; riboflavin biosynthesis; riboflavin from 2-hydroxy-3-oxobutyl phosphate and 5-amino-6-(D-ribitylamino)uracil: step 2/2. Its function is as follows. Catalyzes the dismutation of two molecules of 6,7-dimethyl-8-ribityllumazine, resulting in the formation of riboflavin and 5-amino-6-(D-ribitylamino)uracil. In Actinobacillus pleuropneumoniae (Haemophilus pleuropneumoniae), this protein is Riboflavin synthase (ribE).